A 257-amino-acid polypeptide reads, in one-letter code: Tryptophan synthase alpha chain (257 aa).

Residues Glu-51 and Asp-62 each act as proton acceptor in the active site.

It belongs to the TrpA family. As to quaternary structure, tetramer of two alpha and two beta chains.

The enzyme catalyses (1S,2R)-1-C-(indol-3-yl)glycerol 3-phosphate + L-serine = D-glyceraldehyde 3-phosphate + L-tryptophan + H2O. The protein operates within amino-acid biosynthesis; L-tryptophan biosynthesis; L-tryptophan from chorismate: step 5/5. Its function is as follows. The alpha subunit is responsible for the aldol cleavage of indoleglycerol phosphate to indole and glyceraldehyde 3-phosphate. This is Tryptophan synthase alpha chain from Nitratidesulfovibrio vulgaris (strain ATCC 29579 / DSM 644 / CCUG 34227 / NCIMB 8303 / VKM B-1760 / Hildenborough) (Desulfovibrio vulgaris).